A 330-amino-acid polypeptide reads, in one-letter code: tRNA U34 carboxymethyltransferase (330 aa).

Carboxy-S-adenosyl-L-methionine is bound by residues Lys91, Trp105, Lys110, Gly130, 152-154 (DPS), 181-182 (IE), Met196, Tyr200, and Arg315.

The protein belongs to the class I-like SAM-binding methyltransferase superfamily. CmoB family. As to quaternary structure, homotetramer.

It carries out the reaction carboxy-S-adenosyl-L-methionine + 5-hydroxyuridine(34) in tRNA = 5-carboxymethoxyuridine(34) in tRNA + S-adenosyl-L-homocysteine + H(+). Functionally, catalyzes carboxymethyl transfer from carboxy-S-adenosyl-L-methionine (Cx-SAM) to 5-hydroxyuridine (ho5U) to form 5-carboxymethoxyuridine (cmo5U) at position 34 in tRNAs. The chain is tRNA U34 carboxymethyltransferase from Shewanella woodyi (strain ATCC 51908 / MS32).